The chain runs to 204 residues: MGAVTDDEVIRKRLLIDGDGAGDDRRINLLVKSFIKWCNSGSQEEGYSQYQRMLSTLSQCEFSMGKTLLVYDMNLREMENYEKIYKEIECSIAGAHEKIAECKKQILQAKRIRKNRQEYDALAKVIQHHPDRHETLKELEALGKELEHLSHIKESVEDKLELRRKQFHVLLSTIHELQQTLENDEKLSEVEEAQEASMETDPKP.

Gly2 carries the N-acetylglycine modification. Thr5 bears the Phosphothreonine mark. Lys36 bears the N6-acetyllysine mark. Positions 50–137 are interaction with THOC5; sequence YQRMLSTLSQ…HHPDRHETLK (88 aa). The segment at 105-204 is interaction with NIF3L1; it reads QILQAKRIRK…EASMETDPKP (100 aa). Positions 146 to 204 form a coiled coil; the sequence is LEHLSHIKESVEDKLELRRKQFHVLLSTIHELQQTLENDEKLSEVEEAQEASMETDPKP. The interval 182–204 is disordered; it reads ENDEKLSEVEEAQEASMETDPKP.

The protein belongs to the THOC7 family. In terms of assembly, tetramer; as part of a THO-DDX39B complex. Component of the THO subcomplex, which is composed of THOC1, THOC2, THOC3, THOC5, THOC6 and THOC7. Component of the transcription/export (TREX) complex at least composed of ALYREF/THOC4, DDX39B, SARNP/CIP29, CHTOP and the THO subcomplex; in the complex interacts with THOC1, THOC2 and THOC5; forms a coiled-coil dimer with THOC5; together with THOC5 and THOC6, plays a key structural role in the oligomerization of the THO-DDX39B complex. TREX seems to have a dynamic structure involving ATP-dependent remodeling. Interacts with NIF3L1.

The protein resides in the cytoplasm. It is found in the nucleus. The protein localises to the nucleus speckle. Functionally, component of the THO subcomplex of the TREX complex which is thought to couple mRNA transcription, processing and nuclear export, and which specifically associates with spliced mRNA and not with unspliced pre-mRNA. Required for efficient export of polyadenylated RNA. Plays a key structural role in the oligomerization of the THO-DDX39B complex. TREX is recruited to spliced mRNAs by a transcription-independent mechanism, binds to mRNA upstream of the exon-junction complex (EJC) and is recruited in a splicing- and cap-dependent manner to a region near the 5' end of the mRNA where it functions in mRNA export to the cytoplasm via the TAP/NXF1 pathway. The chain is THO complex subunit 7 homolog (THOC7) from Bos taurus (Bovine).